The sequence spans 895 residues: Alanine--tRNA ligase (895 aa).

Zn(2+) is bound by residues His577, His581, Cys680, and His684.

Belongs to the class-II aminoacyl-tRNA synthetase family. Zn(2+) is required as a cofactor.

The protein localises to the cytoplasm. The catalysed reaction is tRNA(Ala) + L-alanine + ATP = L-alanyl-tRNA(Ala) + AMP + diphosphate. In terms of biological role, catalyzes the attachment of alanine to tRNA(Ala) in a two-step reaction: alanine is first activated by ATP to form Ala-AMP and then transferred to the acceptor end of tRNA(Ala). Also edits incorrectly charged Ser-tRNA(Ala) and Gly-tRNA(Ala) via its editing domain. The chain is Alanine--tRNA ligase from Kocuria rhizophila (strain ATCC 9341 / DSM 348 / NBRC 103217 / DC2201).